Reading from the N-terminus, the 426-residue chain is Serine--tRNA ligase (426 aa).

233 to 235 contributes to the L-serine binding site; sequence TSE. Residue 264–266 coordinates ATP; that stretch reads RAE. Glu287 is an L-serine binding site. Residue 351–354 participates in ATP binding; sequence EISS. Ser387 serves as a coordination point for L-serine.

The protein belongs to the class-II aminoacyl-tRNA synthetase family. Type-1 seryl-tRNA synthetase subfamily. In terms of assembly, homodimer. The tRNA molecule binds across the dimer.

Its subcellular location is the cytoplasm. The catalysed reaction is tRNA(Ser) + L-serine + ATP = L-seryl-tRNA(Ser) + AMP + diphosphate + H(+). It carries out the reaction tRNA(Sec) + L-serine + ATP = L-seryl-tRNA(Sec) + AMP + diphosphate + H(+). It functions in the pathway aminoacyl-tRNA biosynthesis; selenocysteinyl-tRNA(Sec) biosynthesis; L-seryl-tRNA(Sec) from L-serine and tRNA(Sec): step 1/1. Its function is as follows. Catalyzes the attachment of serine to tRNA(Ser). Is also able to aminoacylate tRNA(Sec) with serine, to form the misacylated tRNA L-seryl-tRNA(Sec), which will be further converted into selenocysteinyl-tRNA(Sec). This is Serine--tRNA ligase from Xanthomonas euvesicatoria pv. vesicatoria (strain 85-10) (Xanthomonas campestris pv. vesicatoria).